A 275-amino-acid polypeptide reads, in one-letter code: MAIVKVKPTSPGRRAMVKVVNKDLHKGKPHAALLDTQSSKAGRNNNGRITTRHQGGGHKHHYRVIDFRRTKDGIPAKVERLEYDPNRSANIALVLYADGERRYIIAPKGVTVGQQLMSGSEAPIRAGNTLPIRNIPVGTTIHCIEMLPGKGAQMARSAGTSAMLLAREGVYAQVRLRSGEIRRVHIECRATIGEVGNEEHSLRQIGKAGANRWRGIRPTVRGVAMNPIDHPHGGGEGRTAAGRDPVSPWGTPTKGFRTRRNKRTTTMIVQRRHKR.

Polar residues predominate over residues 38–53 (SSKAGRNNNGRITTRH). Disordered stretches follow at residues 38 to 59 (SSKA…GGHK) and 224 to 257 (AMNP…KGFR).

This sequence belongs to the universal ribosomal protein uL2 family. As to quaternary structure, part of the 50S ribosomal subunit. Forms a bridge to the 30S subunit in the 70S ribosome.

Its function is as follows. One of the primary rRNA binding proteins. Required for association of the 30S and 50S subunits to form the 70S ribosome, for tRNA binding and peptide bond formation. It has been suggested to have peptidyltransferase activity; this is somewhat controversial. Makes several contacts with the 16S rRNA in the 70S ribosome. This Burkholderia multivorans (strain ATCC 17616 / 249) protein is Large ribosomal subunit protein uL2.